A 250-amino-acid polypeptide reads, in one-letter code: DNA repair protein RecO (250 aa).

Belongs to the RecO family.

Involved in DNA repair and RecF pathway recombination. The polypeptide is DNA repair protein RecO (Syntrophomonas wolfei subsp. wolfei (strain DSM 2245B / Goettingen)).